A 487-amino-acid polypeptide reads, in one-letter code: 1-aminocyclopropane-1-carboxylate synthase 1 (487 aa).

Lys286 carries the N6-(pyridoxal phosphate)lysine modification.

The protein belongs to the class-I pyridoxal-phosphate-dependent aminotransferase family. In terms of assembly, homodimer. The cofactor is pyridoxal 5'-phosphate.

The catalysed reaction is S-adenosyl-L-methionine = 1-aminocyclopropane-1-carboxylate + S-methyl-5'-thioadenosine + H(+). Its pathway is alkene biosynthesis; ethylene biosynthesis via S-adenosyl-L-methionine; ethylene from S-adenosyl-L-methionine: step 1/2. In terms of biological role, catalyzes the formation of 1-aminocyclopropane-1-carboxylate, a direct precursor of ethylene in higher plants. This chain is 1-aminocyclopropane-1-carboxylate synthase 1 (ACC1), found in Oryza sativa subsp. indica (Rice).